Consider the following 467-residue polypeptide: Fumarate hydratase class II (467 aa).

Substrate is bound by residues 99–101 (SGT), 130–133 (HPND), 140–142 (SSN), and Thr188. The active-site Proton donor/acceptor is His189. Ser319 is a catalytic residue. Residues Ser320 and 325 to 327 (KVN) contribute to the substrate site.

The protein belongs to the class-II fumarase/aspartase family. Fumarase subfamily. In terms of assembly, homotetramer.

The protein localises to the cytoplasm. The catalysed reaction is (S)-malate = fumarate + H2O. It functions in the pathway carbohydrate metabolism; tricarboxylic acid cycle; (S)-malate from fumarate: step 1/1. Functionally, involved in the TCA cycle. Catalyzes the stereospecific interconversion of fumarate to L-malate. The protein is Fumarate hydratase class II of Thermosynechococcus vestitus (strain NIES-2133 / IAM M-273 / BP-1).